Consider the following 349-residue polypeptide: Aspartate-semialdehyde dehydrogenase (349 aa).

NADP(+)-binding positions include 12 to 15 and 39 to 40; these read TGSV and NS. Arginine 113 contacts phosphate. The active-site Acyl-thioester intermediate is the cysteine 148. Glutamine 175 serves as a coordination point for substrate. An NADP(+)-binding site is contributed by 178 to 179; the sequence is SG. Glutamate 201 provides a ligand contact to substrate. Residue lysine 204 coordinates phosphate. Residue arginine 234 participates in substrate binding. Catalysis depends on histidine 241, which acts as the Proton acceptor. Residue 326 to 327 participates in NADP(+) binding; it reads NT.

This sequence belongs to the aspartate-semialdehyde dehydrogenase family. As to quaternary structure, homodimer.

It catalyses the reaction L-aspartate 4-semialdehyde + phosphate + NADP(+) = 4-phospho-L-aspartate + NADPH + H(+). Its pathway is amino-acid biosynthesis; L-lysine biosynthesis via DAP pathway; (S)-tetrahydrodipicolinate from L-aspartate: step 2/4. The protein operates within amino-acid biosynthesis; L-methionine biosynthesis via de novo pathway; L-homoserine from L-aspartate: step 2/3. It participates in amino-acid biosynthesis; L-threonine biosynthesis; L-threonine from L-aspartate: step 2/5. In terms of biological role, catalyzes the NADPH-dependent formation of L-aspartate-semialdehyde (L-ASA) by the reductive dephosphorylation of L-aspartyl-4-phosphate. This chain is Aspartate-semialdehyde dehydrogenase, found in Leptospira interrogans serogroup Icterohaemorrhagiae serovar Lai (strain 56601).